The chain runs to 390 residues: 8-amino-7-oxononanoate synthase (390 aa).

Arg22 contacts substrate. Position 109–110 (109–110 (GY)) interacts with pyridoxal 5'-phosphate. Substrate is bound at residue His134. Ser180, His208, and Thr236 together coordinate pyridoxal 5'-phosphate. Lys239 carries the N6-(pyridoxal phosphate)lysine modification. Residue Thr353 coordinates substrate.

The protein belongs to the class-II pyridoxal-phosphate-dependent aminotransferase family. BioF subfamily. In terms of assembly, homodimer. The cofactor is pyridoxal 5'-phosphate.

It catalyses the reaction 6-carboxyhexanoyl-[ACP] + L-alanine + H(+) = (8S)-8-amino-7-oxononanoate + holo-[ACP] + CO2. It participates in cofactor biosynthesis; biotin biosynthesis. Functionally, catalyzes the decarboxylative condensation of pimeloyl-[acyl-carrier protein] and L-alanine to produce 8-amino-7-oxononanoate (AON), [acyl-carrier protein], and carbon dioxide. This Azoarcus sp. (strain BH72) protein is 8-amino-7-oxononanoate synthase.